The primary structure comprises 442 residues: Putative mannan endo-1,6-alpha-mannosidase C970.02 (442 aa).

The signal sequence occupies residues 1-19 (MSLTIFISLATILFSFAEA). 10 N-linked (GlcNAc...) asparagine glycosylation sites follow: asparagine 25, asparagine 82, asparagine 107, asparagine 131, asparagine 201, asparagine 236, asparagine 261, asparagine 264, asparagine 277, and asparagine 361.

Belongs to the glycosyl hydrolase 76 family.

It carries out the reaction Random hydrolysis of (1-&gt;6)-alpha-D-mannosidic linkages in unbranched (1-&gt;6)-mannans.. This chain is Putative mannan endo-1,6-alpha-mannosidase C970.02, found in Schizosaccharomyces pombe (strain 972 / ATCC 24843) (Fission yeast).